The sequence spans 196 residues: MEELPATAIGLKVNDGIVLASERRLSYGGYVLSKQAKKVHKIGKFLMAGAGIYGDLQTLTRIMNVEIKYYEISTGKPISVHAAAKLLSVILYQYKVMPFISEILFGGVDEKGPQLYVLDPIGSLIEDNYAAVGSGARIAIGVLESEYDPNMNLDIAAQLITKAIKASIERDITSGDGIDLAIMDKKGNYENKFIPY.

Residues 1–6 constitute a propeptide, removed in mature form; by autocatalysis; sequence MEELPA. The Nucleophile role is filled by Thr7.

This sequence belongs to the peptidase T1B family. As to quaternary structure, the 20S proteasome core is composed of 14 alpha and 14 beta subunits that assemble into four stacked heptameric rings, resulting in a barrel-shaped structure. The two inner rings, each composed of seven catalytic beta subunits, are sandwiched by two outer rings, each composed of seven alpha subunits. The catalytic chamber with the active sites is on the inside of the barrel. Has a gated structure, the ends of the cylinder being occluded by the N-termini of the alpha-subunits. Is capped at one or both ends by the proteasome regulatory ATPase, PAN.

The protein resides in the cytoplasm. It carries out the reaction Cleavage of peptide bonds with very broad specificity.. The formation of the proteasomal ATPase PAN-20S proteasome complex, via the docking of the C-termini of PAN into the intersubunit pockets in the alpha-rings, triggers opening of the gate for substrate entry. Interconversion between the open-gate and close-gate conformations leads to a dynamic regulation of the 20S proteasome proteolysis activity. Component of the proteasome core, a large protease complex with broad specificity involved in protein degradation. The sequence is that of Proteasome subunit beta 1 from Saccharolobus islandicus (strain Y.N.15.51 / Yellowstone #2) (Sulfolobus islandicus).